Here is a 727-residue protein sequence, read N- to C-terminus: 5'-AMP-activated serine/threonine-protein kinase catalytic subunit alpha (727 aa).

The Protein kinase domain maps to 31 to 284 (YRLDKTLGIG…IHEIRNHPWF (254 aa)). Residues 37–45 (LGIGSFGKV) and lysine 60 contribute to the ATP site. Aspartate 154 serves as the catalytic Proton acceptor. Residue threonine 188 is modified to Phosphothreonine. The tract at residues 382–590 (FTTTTGFNPS…GSNNNSYEGG (209 aa)) is disordered. 2 stretches are compositionally biased toward low complexity: residues 391-483 (SNSN…SSIS) and 494-586 (NLNN…NNNS). One can recognise a KA1 domain in the interval 679 to 727 (RMVNGKPIKLVLQLFRVAENRYLLDIKKIEGEIFIFFDICSLMLEELNL).

The protein belongs to the protein kinase superfamily. CAMK Ser/Thr protein kinase family. SNF1 subfamily. As to quaternary structure, heterotrimer of an alpha catalytic subunit, a beta and a gamma non-catalytic subunits.

The enzyme catalyses L-seryl-[protein] + ATP = O-phospho-L-seryl-[protein] + ADP + H(+). The catalysed reaction is L-threonyl-[protein] + ATP = O-phospho-L-threonyl-[protein] + ADP + H(+). Functionally, activated enzyme phosphorylates target proteins and initiates downstream signaling pathways that shift metabolism from anabolic to catabolic pathways. Acts as a highly sensitive cellular energy sensor. The protein is 5'-AMP-activated serine/threonine-protein kinase catalytic subunit alpha (snfA) of Dictyostelium discoideum (Social amoeba).